The primary structure comprises 337 residues: tRNA N6-adenosine threonylcarbamoyltransferase (337 aa).

Fe cation is bound by residues H111 and H115. Residues 134–138 (LVSGG), D167, G180, and N272 contribute to the substrate site. Residue D300 participates in Fe cation binding.

This sequence belongs to the KAE1 / TsaD family. The cofactor is Fe(2+).

The protein localises to the cytoplasm. It carries out the reaction L-threonylcarbamoyladenylate + adenosine(37) in tRNA = N(6)-L-threonylcarbamoyladenosine(37) in tRNA + AMP + H(+). Its function is as follows. Required for the formation of a threonylcarbamoyl group on adenosine at position 37 (t(6)A37) in tRNAs that read codons beginning with adenine. Is involved in the transfer of the threonylcarbamoyl moiety of threonylcarbamoyl-AMP (TC-AMP) to the N6 group of A37, together with TsaE and TsaB. TsaD likely plays a direct catalytic role in this reaction. This chain is tRNA N6-adenosine threonylcarbamoyltransferase, found in Yersinia pseudotuberculosis serotype I (strain IP32953).